We begin with the raw amino-acid sequence, 38 residues long: Cytochrome b6-f complex subunit 5 (38 aa).

Residues 5 to 25 traverse the membrane as a helical segment; it reads LLLGIVLGLIPVTLAGLFVAA.

This sequence belongs to the PetG family. As to quaternary structure, the 4 large subunits of the cytochrome b6-f complex are cytochrome b6, subunit IV (17 kDa polypeptide, PetD), cytochrome f and the Rieske protein, while the 4 small subunits are PetG, PetL, PetM and PetN. The complex functions as a dimer.

The protein resides in the cellular thylakoid membrane. In terms of biological role, component of the cytochrome b6-f complex, which mediates electron transfer between photosystem II (PSII) and photosystem I (PSI), cyclic electron flow around PSI, and state transitions. PetG is required for either the stability or assembly of the cytochrome b6-f complex. The polypeptide is Cytochrome b6-f complex subunit 5 (Picosynechococcus sp. (strain ATCC 27264 / PCC 7002 / PR-6) (Agmenellum quadruplicatum)).